Consider the following 199-residue polypeptide: Recombination protein RecR (199 aa).

The segment at 57–72 (CSVCGNLTDDDPCNIC) adopts a C4-type zinc-finger fold. A Toprim domain is found at 80–176 (STVLVVEDSK…TVTRLARGLA (97 aa)).

The protein belongs to the RecR family.

May play a role in DNA repair. It seems to be involved in an RecBC-independent recombinational process of DNA repair. It may act with RecF and RecO. This is Recombination protein RecR from Streptococcus mutans serotype c (strain ATCC 700610 / UA159).